The following is a 674-amino-acid chain: F420-dependent formate dehydrogenase 1 subunit alpha (674 aa).

Residues 3–59 (LDFIHTICPYCGTGCGVDLVVKDGTLVGTNPFKRHPVNEGKTCIKGSYCHEFVHRDD) form the 4Fe-4S Mo/W bis-MGD-type domain. [4Fe-4S] cluster-binding residues include Cys10, Cys13, Cys17, and Cys45. Position 132 (Sec132) is a non-standard amino acid, selenocysteine.

It belongs to the prokaryotic molybdopterin-containing oxidoreductase family. In terms of assembly, dimer of an alpha (FdhA1) and a beta (FdhB1) subunit. Requires [4Fe-4S] cluster as cofactor. It depends on Mo-bis(molybdopterin guanine dinucleotide) as a cofactor. Zn(2+) is required as a cofactor.

It catalyses the reaction oxidized coenzyme F420-(gamma-L-Glu)(n) + formate + 2 H(+) = reduced coenzyme F420-(gamma-L-Glu)(n) + CO2. Its function is as follows. Catalyzes the oxidation of formate to carbon dioxide, with coenzyme F420 as the electron acceptor. In vitro can also use methyl viologen as electron acceptor. The polypeptide is F420-dependent formate dehydrogenase 1 subunit alpha (Methanococcus maripaludis (strain DSM 14266 / JCM 13030 / NBRC 101832 / S2 / LL)).